The primary structure comprises 438 residues: Enolase (438 aa).

Substrate is bound by residues H159 and E168. E211 functions as the Proton donor in the catalytic mechanism. The Mg(2+) site is built by D246, E297, and D322. Substrate is bound by residues E297 and D322. Catalysis depends on K347, which acts as the Proton acceptor. Substrate is bound by residues 374–377 and K398; that span reads SHRS.

Belongs to the enolase family. In terms of assembly, homodimer. Mg(2+) is required as a cofactor.

Its subcellular location is the cytoplasm. The catalysed reaction is (2R)-2-phosphoglycerate = phosphoenolpyruvate + H2O. Its pathway is carbohydrate degradation; glycolysis; pyruvate from D-glyceraldehyde 3-phosphate: step 4/5. This chain is Enolase (enoA), found in Aspergillus fumigatus (strain ATCC MYA-4609 / CBS 101355 / FGSC A1100 / Af293) (Neosartorya fumigata).